The sequence spans 256 residues: BI1-like protein (256 aa).

A run of 7 helical transmembrane segments spans residues 53–73 (VYGILSAQLLLTTLISAVVVL), 85–105 (PGILLFLCIVPFILIWPLHIY), 113–133 (LILLALFTVSLSFTVGVSCAM), 138–158 (IVLQALILTLSVVGSLTAYTF), 167–187 (FSFLGPILFTSLIILVVTSFI), 189–209 (MFFPLGPTSVAVYGGFSALVF), and 228–248 (EYILASVALYLDILNLFLTIL).

Belongs to the BI1 family.

The protein localises to the membrane. The protein is BI1-like protein of Arabidopsis thaliana (Mouse-ear cress).